Here is a 148-residue protein sequence, read N- to C-terminus: uncharacterized protein (148 aa).

The interval His122 to Asp148 is disordered. Residues Asn123–Arg134 show a composition bias toward basic residues.

This is an uncharacterized protein from Homo sapiens (Human).